A 309-amino-acid chain; its full sequence is Carbamate kinase (309 aa).

This sequence belongs to the carbamate kinase family.

It localises to the cytoplasm. The catalysed reaction is hydrogencarbonate + NH4(+) + ATP = carbamoyl phosphate + ADP + H2O + H(+). The protein operates within metabolic intermediate metabolism; carbamoyl phosphate degradation; CO(2) and NH(3) from carbamoyl phosphate: step 1/1. The polypeptide is Carbamate kinase (arcC) (Staphylococcus haemolyticus (strain JCSC1435)).